Reading from the N-terminus, the 363-residue chain is MKIGVFVPIGNNGWLISTHAPQYMPTFELNKAIVQKAEHYHFDFALSMIKLRGFGGKTEFWDHNLESFTLMAGLAAVTSKIQIYATAATLTLPPAIVARMASTIDSISGGRFGVNLVTGWQKPEYDQMGMWPGDDYFASRYDYLTEYVQVLRDLWGTGRSDFKGDYFTMNDCRVSPRPSQPMKVICAGQSDAGMAFSAQHADYNFCFGKGVNTPTAFAPTAARMMQAAEKTGRDVGSYVLFMVIADETDEAARAKWEHYKAGADEEALAWLTEQSQKDTRSGSDTNVRQMADPTSAVNINMGTLVGSYASVARMLDEVASVPGTDGVLLTFDDFLAGIDAFGERIQPLMRCRDHIAPVTREVA.

FMN contacts are provided by residues 49 to 50 (IK), N115, E124, 140 to 141 (RY), and S190.

It belongs to the NtaA/SnaA/DszA monooxygenase family. RutA subfamily.

The enzyme catalyses uracil + FMNH2 + NADH + O2 = (Z)-3-ureidoacrylate + FMN + NAD(+) + H2O + H(+). The catalysed reaction is thymine + FMNH2 + NADH + O2 = (Z)-2-methylureidoacrylate + FMN + NAD(+) + H2O + H(+). Functionally, catalyzes the pyrimidine ring opening between N-3 and C-4 by an unusual flavin hydroperoxide-catalyzed mechanism, adding oxygen atoms in the process to yield ureidoacrylate peracid, that immediately reacts with FMN forming ureidoacrylate and FMN-N(5)-oxide. The FMN-N(5)-oxide reacts spontaneously with NADH to produce FMN. Requires the flavin reductase RutF to regenerate FMN in vivo. This is Pyrimidine monooxygenase RutA from Klebsiella variicola (strain At-22).